Here is a 184-residue protein sequence, read N- to C-terminus: Oligoribonuclease (184 aa).

Positions 8-171 constitute an Exonuclease domain; sequence LIWIDLEMTG…DDIRESIAEL (164 aa). Residue Tyr-129 is part of the active site.

It belongs to the oligoribonuclease family.

The protein localises to the cytoplasm. 3'-to-5' exoribonuclease specific for small oligoribonucleotides. The polypeptide is Oligoribonuclease (Pasteurella multocida (strain Pm70)).